The primary structure comprises 335 residues: Large ribosomal subunit protein uL10 (335 aa).

A disordered region spans residues 300–335 (QVSEQAAEKKEEKKEEEKKGPSEEEIGGGLSSLFGG). Residues 305–321 (AAEKKEEKKEEEKKGPS) are compositionally biased toward basic and acidic residues. The span at 326–335 (GGGLSSLFGG) shows a compositional bias: gly residues.

The protein belongs to the universal ribosomal protein uL10 family. Part of the 50S ribosomal subunit. Forms part of the ribosomal stalk which helps the ribosome interact with GTP-bound translation factors. Forms a heptameric L10(L12)2(L12)2(L12)2 complex, where L10 forms an elongated spine to which the L12 dimers bind in a sequential fashion.

Functionally, forms part of the ribosomal stalk, playing a central role in the interaction of the ribosome with GTP-bound translation factors. This is Large ribosomal subunit protein uL10 from Sulfolobus acidocaldarius (strain ATCC 33909 / DSM 639 / JCM 8929 / NBRC 15157 / NCIMB 11770).